The primary structure comprises 1196 residues: Calcium-activated potassium channel subunit alpha-1 (1196 aa).

At 1–52 (MATWNASQIILNSMSNIIESPQSKPRPVMASNGASLFIPVTMEVPCDQGTRM) the chain is on the extracellular side. A helical membrane pass occupies residues 53–73 (WWAFLASSMVTFFGGLFIILV). Residues 74–146 (WRTFKYLWTV…MISAQTLTGR (73 aa)) are Cytoplasmic-facing. The helical transmembrane segment at 147–167 (VLVVTVFALSIGALMIYFIDS) threads the bilayer. At 168-182 (SNPIESCQNFYKDFT) the chain is on the extracellular side. The helical transmembrane segment at 183 to 203 (LQIDMAFNIFFLLYFGLRFIA) threads the bilayer. Topologically, residues 204–207 (ANDK) are cytoplasmic. A helical membrane pass occupies residues 208-228 (LWFWLEVNSVVDFFTVPPVFV). The Extracellular portion of the chain corresponds to 229-232 (SVYL). The helical; Voltage-sensor transmembrane segment at 233 to 253 (NRSWLGLRFLRALRLIQFSEI) threads the bilayer. The Cytoplasmic portion of the chain corresponds to 254–268 (LQFLNILKTSNSIKL). Residues 269–289 (VNLCSIFISTWLTAAGFIHLV) traverse the membrane as a helical segment. Residues 290 to 303 (ENSGDPWRNFENSQ) are Extracellular-facing. An intramembrane region (pore-forming) is located at residues 304 to 326 (DLSYWECMYLLMVTMSTVGYGDV). The Selectivity for potassium signature appears at 320–323 (TVGY). Topologically, residues 327 to 335 (YAKTTLGRL) are extracellular. The helical transmembrane segment at 336-356 (FMVFFILGGLAMFASYVPEII) threads the bilayer. Over 357–1196 (ELIGNRKKYG…PPIREVEDEC (840 aa)) the chain is Cytoplasmic. Positions 375 to 517 (RKHIVVCGHI…WNWKDGDDAI (143 aa)) constitute an RCK N-terminal 1 domain. Mg(2+) contacts are provided by E407, Q430, and E432. Residues 524 to 544 (LGFIAQSCLAQGLSTMLANLF) are segment S7. Positions 581-601 (LSFPAVCELCFVKLKLLMIAI) are segment S8. The segment at 645 to 649 (CKACH) is heme-binding motif. Residues 672–697 (SALSPKKKQRNGGMRHSPNTSPNMMR) are disordered. Residues 748–768 (VLSGHVVVCIFGDMTSALIGV) form a segment S9 region. Residues 750 to 894 (SGHVVVCIFG…MERSSPDNSP (145 aa)) enclose the RCK N-terminal 2 domain. The Calcium bowl motif lies at 914–936 (TELVNDSNVQFLDQDDDDDPDTE). Residues Q923, D926, D929, and D931 each coordinate Ca(2+). The interval 943–963 (FACGTAFAVSVLDSLMSATYF) is segment S10. Positions 1098–1119 (ASLSHSSHSSHSSSKKSSSVTS) are enriched in low complexity. Residues 1098 to 1149 (ASLSHSSHSSHSSSKKSSSVTSILHTASANRQNRVKARDSRDKQKMGQAEKK) form a disordered region. Polar residues predominate over residues 1120-1129 (ILHTASANRQ). The span at 1133 to 1149 (KARDSRDKQKMGQAEKK) shows a compositional bias: basic and acidic residues.

It belongs to the potassium channel family. Calcium-activated (TC 1.A.1.3) subfamily. KCa1.1/KCNMA1 sub-subfamily. As to quaternary structure, homotetramer; which constitutes the calcium-activated potassium channel. In terms of tissue distribution, expressed in both the somites and neural tube of 1 day embryos. Within the nervous system, it is restricted to dorsal parts, and expressed centrally in regions dedicated to processing of sensory information. Six hours later, it is expressed segmentally within the somites. At this time, it is expressed in a primary sensory organ, the trigeminal ganglion. By 2 days, it is also expressed in other primary sensory organs, such as the otic vesicle, and the eye. Within the retina, it is expressed to an internal layer. In the developing otic vesicle, it is abundantly expressed near the apical surface. Isoform 3 is neural-specific, and is only expressed during late stages of neuronal differentiation.

It localises to the cell membrane. It catalyses the reaction K(+)(in) = K(+)(out). Ethanol and carbon monoxide-bound heme increase channel activation. Heme inhibits channel activation. Functionally, potassium channel activated by both membrane depolarization or increase in cytosolic Ca(2+) that mediates export of K(+). It is also activated by the concentration of cytosolic Mg(2+). Its activation dampens the excitatory events that elevate the cytosolic Ca(2+) concentration and/or depolarize the cell membrane. It therefore contributes to repolarization of the membrane potential. Plays a key role in controlling excitability in a number of systems, such as regulation of the contraction of smooth muscle, the tuning of hair cells in the cochlea, regulation of transmitter release, and innate immunity. In smooth muscles, its activation by high level of Ca(2+), caused by ryanodine receptors in the sarcoplasmic reticulum, regulates the membrane potential. In cochlea cells, its number and kinetic properties partly determine the characteristic frequency of each hair cell and thereby helps to establish a tonotopic map. Highly sensitive to both iberiotoxin (IbTx) and charybdotoxin (CTX). This chain is Calcium-activated potassium channel subunit alpha-1 (kcnma1), found in Xenopus laevis (African clawed frog).